We begin with the raw amino-acid sequence, 134 residues long: ATP synthase epsilon chain (134 aa).

The protein belongs to the ATPase epsilon chain family. F-type ATPases have 2 components, CF(1) - the catalytic core - and CF(0) - the membrane proton channel. CF(1) has five subunits: alpha(3), beta(3), gamma(1), delta(1), epsilon(1). CF(0) has three main subunits: a, b and c.

The protein resides in the cell membrane. In terms of biological role, produces ATP from ADP in the presence of a proton gradient across the membrane. This Ruminiclostridium cellulolyticum (strain ATCC 35319 / DSM 5812 / JCM 6584 / H10) (Clostridium cellulolyticum) protein is ATP synthase epsilon chain.